A 194-amino-acid chain; its full sequence is dCTP deaminase, dUMP-forming (194 aa).

Residues 104–109 (RSSLGR), aspartate 122, 130–132 (TLE), glutamine 151, tyrosine 165, lysine 172, and glutamine 176 each bind dCTP. The Proton donor/acceptor role is filled by glutamate 132.

The protein belongs to the dCTP deaminase family. In terms of assembly, homotrimer.

The catalysed reaction is dCTP + 2 H2O = dUMP + NH4(+) + diphosphate. The protein operates within pyrimidine metabolism; dUMP biosynthesis; dUMP from dCTP: step 1/1. Functionally, bifunctional enzyme that catalyzes both the deamination of dCTP to dUTP and the hydrolysis of dUTP to dUMP without releasing the toxic dUTP intermediate. The polypeptide is dCTP deaminase, dUMP-forming (Dictyoglomus thermophilum (strain ATCC 35947 / DSM 3960 / H-6-12)).